The sequence spans 311 residues: Methionyl-tRNA formyltransferase (311 aa).

112 to 115 (SLLP) provides a ligand contact to (6S)-5,6,7,8-tetrahydrofolate.

It belongs to the Fmt family.

The enzyme catalyses L-methionyl-tRNA(fMet) + (6R)-10-formyltetrahydrofolate = N-formyl-L-methionyl-tRNA(fMet) + (6S)-5,6,7,8-tetrahydrofolate + H(+). Its function is as follows. Attaches a formyl group to the free amino group of methionyl-tRNA(fMet). The formyl group appears to play a dual role in the initiator identity of N-formylmethionyl-tRNA by promoting its recognition by IF2 and preventing the misappropriation of this tRNA by the elongation apparatus. This is Methionyl-tRNA formyltransferase from Rhizobium etli (strain ATCC 51251 / DSM 11541 / JCM 21823 / NBRC 15573 / CFN 42).